Reading from the N-terminus, the 256-residue chain is DNA repair protein RecO (256 aa).

It belongs to the RecO family.

Its function is as follows. Involved in DNA repair and RecF pathway recombination. In Delftia acidovorans (strain DSM 14801 / SPH-1), this protein is DNA repair protein RecO.